A 1314-amino-acid polypeptide reads, in one-letter code: Phosphoribosylformylglycinamidine synthase (1314 aa).

ATP-binding positions include 307–318 (GAATGAGGEIRD) and A674. Mg(2+) contacts are provided by D675, E714, N718, and D880. S882 contacts ATP. One can recognise a Glutamine amidotransferase type-1 domain in the interval 1063–1314 (IAILREQGVN…LFAGARKALG (252 aa)). C1156 serves as the catalytic Nucleophile. Catalysis depends on residues H1279 and E1281.

In the N-terminal section; belongs to the FGAMS family. Monomer.

It is found in the cytoplasm. The enzyme catalyses N(2)-formyl-N(1)-(5-phospho-beta-D-ribosyl)glycinamide + L-glutamine + ATP + H2O = 2-formamido-N(1)-(5-O-phospho-beta-D-ribosyl)acetamidine + L-glutamate + ADP + phosphate + H(+). It functions in the pathway purine metabolism; IMP biosynthesis via de novo pathway; 5-amino-1-(5-phospho-D-ribosyl)imidazole from N(2)-formyl-N(1)-(5-phospho-D-ribosyl)glycinamide: step 1/2. Phosphoribosylformylglycinamidine synthase involved in the purines biosynthetic pathway. Catalyzes the ATP-dependent conversion of formylglycinamide ribonucleotide (FGAR) and glutamine to yield formylglycinamidine ribonucleotide (FGAM) and glutamate. The chain is Phosphoribosylformylglycinamidine synthase from Neisseria gonorrhoeae (strain ATCC 700825 / FA 1090).